The primary structure comprises 248 residues: UPF0524 protein C3orf70 homolog (248 aa).

The tract at residues 169-248 (KESDTPKLGH…EVIETMETTV (80 aa)) is disordered. Acidic residues predominate over residues 200–227 (SCDEDTEEGAELSSEEDYSPESSWEPDE).

The protein belongs to the UPF0524 family.

Functionally, may play a role in neuronal and neurobehavioral development. The sequence is that of UPF0524 protein C3orf70 homolog from Mus musculus (Mouse).